We begin with the raw amino-acid sequence, 71 residues long: Delta-actitoxin-Avd2b 4 (71 aa).

An N-terminal signal peptide occupies residues 1 to 20 (MMNRLLVFLMLGAFMLVVSA). Positions 21-41 (NDAYGDEPAFKDLNQGDESLG) are excised as a propeptide. 3 disulfide bridges follow: C46/C61, C47/C55, and C49/C66.

This sequence belongs to the sea anemone short toxin (type III) family.

The protein localises to the secreted. It is found in the nematocyst. Functionally, voltage-gated sodium channel (Nav) inhibitor. 1 uM completely inhibits insect voltage-gated sodium channel inactivation (DmNav1 from D.melanogaster). The polypeptide is Delta-actitoxin-Avd2b 4 (Anemonia viridis (Snakelocks anemone)).